The chain runs to 263 residues: tRNA (guanine-N(7)-)-methyltransferase (263 aa).

Residues 1–33 (MSDHGRMHSTGSEVAAPVAPDPDTEGVHPHFNR) form a disordered region. S-adenosyl-L-methionine is bound by residues Glu-89, Glu-114, Asp-146, and Asp-169. The active site involves Asp-169. Residues Lys-173, Asp-205, and 242–245 (TKYE) each bind substrate.

This sequence belongs to the class I-like SAM-binding methyltransferase superfamily. TrmB family.

It catalyses the reaction guanosine(46) in tRNA + S-adenosyl-L-methionine = N(7)-methylguanosine(46) in tRNA + S-adenosyl-L-homocysteine. The protein operates within tRNA modification; N(7)-methylguanine-tRNA biosynthesis. Functionally, catalyzes the formation of N(7)-methylguanine at position 46 (m7G46) in tRNA. The protein is tRNA (guanine-N(7)-)-methyltransferase of Mycolicibacterium gilvum (strain PYR-GCK) (Mycobacterium gilvum (strain PYR-GCK)).